Here is a 326-residue protein sequence, read N- to C-terminus: ELMO domain-containing protein 1 (326 aa).

The ELMO domain occupies 133-306; it reads QHEEMLLKLW…KFRKRIIKQL (174 aa).

Its function is as follows. Acts as a GTPase-activating protein (GAP) toward guanine nucleotide exchange factors like ARL2, ARL3, ARF1 and ARF6, but not for GTPases outside the Arf family. This chain is ELMO domain-containing protein 1 (ELMOD1), found in Bos taurus (Bovine).